The primary structure comprises 278 residues: Gasdermin-like protein het-Q1 (278 aa).

It belongs to the gasdermin family. In terms of assembly, homooligomer; forms a homooligomeric ring-shaped pore complex when inserted in the membrane. The precursor form is cleaved by het-Q2, generating the pore-forming protein (Gasdermin-like protein het-Q1, N-terminal).

Its subcellular location is the cell membrane. Functionally, gasdermin-like protein involved in heterokaryon incompatibility, a process that ensures that during spontaneous vegetative cell fusion, only compatible cells from the same colony survive (non-self-recognition). In P.anserina, the het-q locus exists as 2 incompatible alleles, het-Q1 (this entry) and het-Q2 (AC P0DW09). This form constitutes the precursor of the pore-forming protein: during the allorecognition process, it is cleaved by het-Q2, releasing the N-terminal moiety (Gasdermin-like protein het-Q1, N-terminal) that binds to membranes and forms pores, triggering cell death. Pore-forming protein that causes membrane permeabilization and cell death. Released upon cleavage and maturation by het-Q2 and binds to membrane inner leaflet lipids. Homooligomerizes within the membrane and forms pores of 10-15 nanometers (nm) of inner diameter, triggering cell death. The sequence is that of Gasdermin-like protein het-Q1 from Podospora anserina (strain S / ATCC MYA-4624 / DSM 980 / FGSC 10383) (Pleurage anserina).